Here is a 517-residue protein sequence, read N- to C-terminus: FAD-dependent monooxygenase FUP4 (517 aa).

The signal sequence occupies residues 1 to 19 (MRQSSTLTWTSVLLAPLAA). One can recognise an FAD-binding PCMH-type domain in the interval 75 to 246 (QALRPACLVH…TRFDLDLYDQ (172 aa)). His112 carries the post-translational modification Pros-8alpha-FAD histidine. N-linked (GlcNAc...) asparagine glycosylation is found at Asn163, Asn208, and Asn346.

This sequence belongs to the oxygen-dependent FAD-linked oxidoreductase family. FAD serves as cofactor.

It functions in the pathway secondary metabolite biosynthesis; terpenoid biosynthesis. In terms of biological role, FAD-dependent monooxygenase; part of the gene cluster that mediates the biosynthesis of the mycotoxin fusaproliferin (FUP) that belongs to the class of bicyclic sesterterpenoids. FUP4 catalyzes the oxidation of the hydroxy group at the C-16 position of preterpestacin III to a keto group, leading to the formation of (-)-terpestacin. The product of FUP1, preterpestacin I, might also serve as a substrate of FUP4 to yield oxo-preterpestacin I. The FUP biosynthetic pathway starts with the enzyme encoded by FUP1 that combines a C-terminal prenyltransferase domain responsible for the synthesis of geranylgeranyl diphosphate with the N-terminal terpene cyclase domain, to yield preterpestacin I. Preterpestacin I is then decorated by oxygenation steps that are catalyzed by two cytochrome P450 monooxygenases. First, FUP2 introduces a hydroxyl group at the C-24 position resulting in the formation of preterpestacin IIa. The second P450 monooxygenase catalyzes the hydroxylation at C-16 and C-17 of preterpestacin IIa, producing preterpestacin III. Subsequently, the FAD-dependent oxidoreductase FUP4 catalyzes the oxidation of the hydroxy group at the C-16 position to a keto group, leading to the formation of (-)-terpestacin, which is the immediate precursor of FUP. The final step in the proposed biosynthetic pathway is the addition of an acetyl group at the C-24 position of terpestacin, which is catalyzed by the acetyltransferase FUP5. The polypeptide is FAD-dependent monooxygenase FUP4 (Fusarium proliferatum (strain ET1) (Orchid endophyte fungus)).